The primary structure comprises 283 residues: MQALYDVPAPAKLNLFLHVTGRRPDGYHLLQSVFMLIDWCDVLHFEVGGNGAVTREDLTSALPADDLVVRAARALQKATGCPQGVHIGVSKHIPAQAGLGGGSSDAASTLLALNRLWKLKLSRQQLHSIALTLGADVPFFLCGASAWVEGIGDIIRPLELEHQLPPAAFAVVKPEAGLDTRMIFSHPSLKRDSSCATISGFAATHYQFGSNDLQPVAQALCPEITQAINWLESKGLQGRMTGSGSAVFAQITHAVDLHDAPAAWHVKVCENLKSHPLADWVFG.

The active site involves Lys-12. 94 to 104 (PAQAGLGGGSS) is a binding site for ATP. Residue Asp-136 is part of the active site.

This sequence belongs to the GHMP kinase family. IspE subfamily.

The catalysed reaction is 4-CDP-2-C-methyl-D-erythritol + ATP = 4-CDP-2-C-methyl-D-erythritol 2-phosphate + ADP + H(+). It participates in isoprenoid biosynthesis; isopentenyl diphosphate biosynthesis via DXP pathway; isopentenyl diphosphate from 1-deoxy-D-xylulose 5-phosphate: step 3/6. Functionally, catalyzes the phosphorylation of the position 2 hydroxy group of 4-diphosphocytidyl-2C-methyl-D-erythritol. In Acidovorax sp. (strain JS42), this protein is 4-diphosphocytidyl-2-C-methyl-D-erythritol kinase.